A 189-amino-acid chain; its full sequence is ATP synthase subunit delta (189 aa).

The protein belongs to the ATPase delta chain family. F-type ATPases have 2 components, F(1) - the catalytic core - and F(0) - the membrane proton channel. F(1) has five subunits: alpha(3), beta(3), gamma(1), delta(1), epsilon(1). F(0) has three main subunits: a(1), b(2) and c(10-14). The alpha and beta chains form an alternating ring which encloses part of the gamma chain. F(1) is attached to F(0) by a central stalk formed by the gamma and epsilon chains, while a peripheral stalk is formed by the delta and b chains.

The protein localises to the cell inner membrane. In terms of biological role, f(1)F(0) ATP synthase produces ATP from ADP in the presence of a proton or sodium gradient. F-type ATPases consist of two structural domains, F(1) containing the extramembraneous catalytic core and F(0) containing the membrane proton channel, linked together by a central stalk and a peripheral stalk. During catalysis, ATP synthesis in the catalytic domain of F(1) is coupled via a rotary mechanism of the central stalk subunits to proton translocation. Its function is as follows. This protein is part of the stalk that links CF(0) to CF(1). It either transmits conformational changes from CF(0) to CF(1) or is implicated in proton conduction. This chain is ATP synthase subunit delta, found in Rickettsia bellii (strain OSU 85-389).